Consider the following 129-residue polypeptide: UPF0325 protein HCH_00487 (129 aa).

The protein belongs to the UPF0325 family.

The protein is UPF0325 protein HCH_00487 of Hahella chejuensis (strain KCTC 2396).